Reading from the N-terminus, the 822-residue chain is Nuclear factor of activated T-cells, cytoplasmic 1 (822 aa).

Positions 110-115 (PRIEIT) are calcineurin-binding. The transactivation domain A (TAD-A) stretch occupies residues 118-210 (LGLHHNNGQF…CVSPKTTDPE (93 aa)). A compositionally biased stretch (polar residues) spans 192–206 (PQTSPWQSPCVSPKT). The tract at residues 192-289 (PQTSPWQSPC…HSSPRVSVTD (98 aa)) is disordered. 2 consecutive repeat copies span residues 195–211 (SPWQ…DPEE) and 225–241 (SPRH…VTEE). Positions 195-290 (SPWQSPCVSP…SSPRVSVTDD (96 aa)) are 3 X SP repeats. Phosphoserine occurs at positions 225 and 229. The span at 225–242 (SPRHSPSTSPRTSVTEES) shows a compositional bias: low complexity. Ser-237 is subject to Phosphoserine; by PKA. Positions 257–259 (KRK) match the Nuclear localization signal motif. Copy 3 of the repeat occupies 274 to 290 (SPTPSPHSSPRVSVTDD). Residue Ser-286 is modified to Phosphoserine; by PKA. The short motif at 302–313 (SAIVAAINALST) is the Nuclear export signal element. One can recognise an RHD domain in the interval 400 to 582 (PSLPALDWQL…NPIECSQRSA (183 aa)). Residues 429-436 (RAHYETEG) mediate DNA binding. Residues 672-674 (KRK) carry the Nuclear localization signal motif. The interval 772 to 822 (GPGHLGLQRPAGGVLGGQEAPRPGGPHPGAPQLHPLNLSQSIVTRLTEPQP) is disordered. The span at 808 to 822 (NLSQSIVTRLTEPQP) shows a compositional bias: polar residues.

Member of the multicomponent NFATC transcription complex that consists of at least two components, a pre-existing cytoplasmic component NFATC2 and an inducible nuclear component NFATC1. Other members such as NFATC4, NFATC3 or members of the activating protein-1 family, MAF, GATA4 and Cbp/p300 can also bind the complex. NFATC proteins bind to DNA as monomers. Interacts with HOMER2 and HOMER3; this interaction may compete with calcineurin/PPP3CA-binding and hence prevent NFATC1 dephosphorylation and activation. Interacts with TLE6/GRG6. Post-translationally, phosphorylated by NFATC-kinase and GSK3B; phosphorylation induces NFATC1 nuclear exit and dephosphorylation by calcineurin promotes nuclear import. Phosphorylation by PKA and DYRK2 negatively modulates nuclear accumulation, and promotes subsequent phosphorylation by GSK3B or casein kinase 1.

It is found in the cytoplasm. It localises to the nucleus. Plays a role in the inducible expression of cytokine genes in T-cells, especially in the induction of the IL-2 or IL-4 gene transcription. Also controls gene expression in embryonic cardiac cells. Could regulate not only the activation and proliferation but also the differentiation and programmed death of T-lymphocytes as well as lymphoid and non-lymphoid cells. Required for osteoclastogenesis and regulates many genes important for osteoclast differentiation and function. The sequence is that of Nuclear factor of activated T-cells, cytoplasmic 1 (NFATC1) from Sus scrofa (Pig).